We begin with the raw amino-acid sequence, 291 residues long: uncharacterized protein (291 aa).

This sequence to E.cuniculi ECU03_0120.

This is an uncharacterized protein from Encephalitozoon cuniculi (strain GB-M1) (Microsporidian parasite).